Reading from the N-terminus, the 119-residue chain is Large ribosomal subunit protein bL20 (119 aa).

This sequence belongs to the bacterial ribosomal protein bL20 family.

Functionally, binds directly to 23S ribosomal RNA and is necessary for the in vitro assembly process of the 50S ribosomal subunit. It is not involved in the protein synthesizing functions of that subunit. The protein is Large ribosomal subunit protein bL20 of Nitrobacter hamburgensis (strain DSM 10229 / NCIMB 13809 / X14).